A 154-amino-acid polypeptide reads, in one-letter code: 6,7-dimethyl-8-ribityllumazine synthase (154 aa).

5-amino-6-(D-ribitylamino)uracil-binding positions include Phe-22, 56-58 (AFE), and 81-83 (VLI). 86 to 87 (ET) is a binding site for (2S)-2-hydroxy-3-oxobutyl phosphate. The active-site Proton donor is the His-89. Leu-114 contacts 5-amino-6-(D-ribitylamino)uracil. A (2S)-2-hydroxy-3-oxobutyl phosphate-binding site is contributed by Arg-128.

The protein belongs to the DMRL synthase family.

It carries out the reaction (2S)-2-hydroxy-3-oxobutyl phosphate + 5-amino-6-(D-ribitylamino)uracil = 6,7-dimethyl-8-(1-D-ribityl)lumazine + phosphate + 2 H2O + H(+). The protein operates within cofactor biosynthesis; riboflavin biosynthesis; riboflavin from 2-hydroxy-3-oxobutyl phosphate and 5-amino-6-(D-ribitylamino)uracil: step 1/2. Catalyzes the formation of 6,7-dimethyl-8-ribityllumazine by condensation of 5-amino-6-(D-ribitylamino)uracil with 3,4-dihydroxy-2-butanone 4-phosphate. This is the penultimate step in the biosynthesis of riboflavin. In Chlamydia pneumoniae (Chlamydophila pneumoniae), this protein is 6,7-dimethyl-8-ribityllumazine synthase.